We begin with the raw amino-acid sequence, 224 residues long: MNTPLPPQSLDELLRRAKMMAGLSLGQLAAGLGWPVPANLKRDKGWIGQLIEQELGATAGSRPEQDFLHLGVELKTIPIDRSGKPLETTYVCVAPLMDTHGLRWEQSLVKHKLERVLWVPVEGERDIPVADRRIGTAILWQPTPQQSASLRQDWEEIMEFIALGKVHRLSARHGEVLQLRPKAANAAAKTECIMEDGTVGLTNPRGFYLKIPFTQAILRQAFDY.

Belongs to the MutH family.

It is found in the cytoplasm. Functionally, sequence-specific endonuclease that cleaves unmethylated GATC sequences. It is involved in DNA mismatch repair. The chain is DNA mismatch repair protein MutH from Shewanella amazonensis (strain ATCC BAA-1098 / SB2B).